The chain runs to 262 residues: Apolipoprotein A-I (262 aa).

Residues 1–18 (MKFLALALTILLAAATQA) form the signal peptide. The segment at 32–63 (VKVAMMEYMAQVKETGQRSIDLLDDTEFKEYK) is 3 X approximate tandem repeats. Tandem repeats lie at residues 64-85 (VQLS…QSLA) and 87-107 (YSEA…AEVM). A 10 X approximate tandem repeats region spans residues 64-262 (VQLSQSLDNL…YETISQAMKA (199 aa)). The stretch at 108 to 118 (KDVEDVRTQLE) is one 3; half-length repeat. 5 tandem repeats follow at residues 119–140 (PKRA…KKLE), 141–162 (PLIK…VKME), 163–184 (PVVE…AKLM), 185–206 (PIVE…TLAA), and 207–228 (PYAE…EKVG). One copy of the 9; half-length repeat lies at 229 to 239 (PLTNDFKGQVG). The stretch at 240–262 (PAAEQAKEKLMDFYETISQAMKA) is repeat 10.

The protein belongs to the apolipoprotein A1/A4/E family.

Its subcellular location is the secreted. Its function is as follows. Participates in the reverse transport of cholesterol from tissues to the liver for excretion by promoting cholesterol efflux from tissues and by acting as a cofactor for the lecithin cholesterol acyltransferase (LCAT). This Salmo trutta (Brown trout) protein is Apolipoprotein A-I (apoa1).